The sequence spans 270 residues: ATP synthase subunit b 1 (270 aa).

Residues 2 to 22 traverse the membrane as a helical segment; it reads LIDWFTVIAQLINFLVLVWLL.

This sequence belongs to the ATPase B chain family. In terms of assembly, F-type ATPases have 2 components, F(1) - the catalytic core - and F(0) - the membrane proton channel. F(1) has five subunits: alpha(3), beta(3), gamma(1), delta(1), epsilon(1). F(0) has three main subunits: a(1), b(2) and c(10-14). The alpha and beta chains form an alternating ring which encloses part of the gamma chain. F(1) is attached to F(0) by a central stalk formed by the gamma and epsilon chains, while a peripheral stalk is formed by the delta and b chains.

It localises to the cell inner membrane. Its function is as follows. F(1)F(0) ATP synthase produces ATP from ADP in the presence of a proton or sodium gradient. F-type ATPases consist of two structural domains, F(1) containing the extramembraneous catalytic core and F(0) containing the membrane proton channel, linked together by a central stalk and a peripheral stalk. During catalysis, ATP synthesis in the catalytic domain of F(1) is coupled via a rotary mechanism of the central stalk subunits to proton translocation. Functionally, component of the F(0) channel, it forms part of the peripheral stalk, linking F(1) to F(0). The sequence is that of ATP synthase subunit b 1 from Marinomonas sp. (strain MWYL1).